Consider the following 493-residue polypeptide: MPTRSRSKANQRRRRPRRVVVVAPSMAQPRTQSRRPRRRNKRGGGLNGSHTVDFSMVHGPFNGNATGTVKFGPSSDCQCIKGNLAAYQKYRIVWLKVVYQSEAAATDRGCIAYHVDTSTTKKAADVVLLDTWNIRSNGSATFGREILGDQPWYESNKDQFFFLYRGTGGTDVAGHYRISGRIQLMNASLWGDDAPPSPGPDPGPQPPPPPPPSPTPVGARFWGYEGVPESRMISERNDHDIDVKPLSFITMYKWEDESWTSVKLSASYLQNDQVEATPYFLIPSSKGKFSVYIECEGFQAVKSIGGKSDGCWGGLIAYNRKKDGWQARAYTGTVLSNYRSTTTVINGHPDCEVNDCKFKPDRGVESDLICSFHLEAEEDSYWALQAPPIQKSSDYNYVVSYGGYTEKSIEWGSVSISIDEVNQTASASPWRGRARKLAILQETAVPPPFPPGGVMDYHLGDREGDQTGTSEKGLLKKPPLPKWDLQRSRSPLD.

2 stretches are compositionally biased toward basic residues: residues 1-18 (MPTRSRSKANQRRRRPRR) and 32-42 (QSRRPRRRNKR). Disordered stretches follow at residues 1-50 (MPTR…NGSH), 189-218 (LWGDDAPPSPGPDPGPQPPPPPPPSPTPVG), and 445-493 (VPPP…SPLD). The tract at residues 191–493 (GDDAPPSPGP…DLQRSRSPLD (303 aa)) is readthrough domain (RTD). Over residues 195–215 (PPSPGPDPGPQPPPPPPPSPT) the composition is skewed to pro residues. The span at 484–493 (DLQRSRSPLD) shows a compositional bias: basic and acidic residues.

It belongs to the luteoviruses readthrough protein family.

It is found in the virion. Functionally, minor component of the viral capsid involved in aphid transmission. The RTD domain of the protein is exposed on the surface of the particle and determines the vector specificity and tropism of the virus. The RTD domain is not necessary for virus stability in the host hemolymph. The sequence is that of Minor capsid protein P3-RTD from Pea enation mosaic virus-1 (strain WSG) (PEMV-1).